Consider the following 286-residue polypeptide: CBY1-interacting BAR domain-containing protein 1 (286 aa).

The transit peptide at 1 to 47 directs the protein to the mitochondrion; the sequence is MLRRNLDERDAQTKQLQDAVTNVEKHFGELCQIFAAYVRKTARLRDK. Positions 10 to 220 are BAR-like; it reads DAQTKQLQDA…NIDEDEDLEV (211 aa). A coiled-coil region spans residues 107-178; sequence KMKRDDLKAT…IDNFEKQKIK (72 aa). The segment at 258–286 is disordered; the sequence is GQISTCRTRKDQQVEDEDDEELDVTEDEN. The segment covering 271–286 has biased composition (acidic residues); sequence VEDEDDEELDVTEDEN.

It belongs to the CIBAR family. As to quaternary structure, homodimer (via BAR-like domain). Heterodimer with FAM92B (via BAR-like domains). Interacts (via BAR-like domain) with CBY1; this interaction is required for targeting FAM92A to centriole and cilium basal body. Interacts (via BAR-like domain) with CBY3; both proteins form a ninefold symmetric structure at the flagellar base; are recruited to the annulus in a mutually dependent manner and regulate annulus positionning. In terms of tissue distribution, expressed in the heart, liver, spleen, lung, kidney, brain and muscle (at protein level). Strongly expressed throughout the developing limb bud, including the progress zone and the apical ectodermal ridge.

The protein resides in the cytoplasm. The protein localises to the cytoskeleton. It localises to the microtubule organizing center. Its subcellular location is the centrosome. It is found in the centriole. The protein resides in the cilium basal body. The protein localises to the cell projection. It localises to the cilium. Its subcellular location is the nucleus. It is found in the mitochondrion inner membrane. The protein resides in the flagellum. Plays a critical role in regulating mitochondrial ultrastructure and function by maintaining the integrity of mitochondrial morphology, particularly the organization of cristae. Preferentially binds to negatively charged phospholipids like cardiolipin and phosphatidylinositol 4,5-bisphosphate enhancing its interaction with mitochondrial membranes. Induces membrane curvature and tubulation, which are critical for maintaining mitochondrial ultrastructure and the organization of cristae. Plays a crucial role in ciliogenesis. May play a role in limb development through its role in ciliogenesis. Plays a key role in the correct positioning of the annulus, a septin-based ring structure in the sperm flagellum, serving both as a physical barrier and a membrane diffusion barrier that separates the midpiece (MP) from the principal piece (PP). This positioning is essential for proper sperm motility and function. Interacts with CBY3 to form a complex which localizes to the curved membrane region of the flagellar pocket. By doing so, may provide stability and rigidity to the periannular membrane to prevent membrane deformation. This function is crucial for halting annulus migration at the proximal end of the fibrous sheath-containing PP. In Mus musculus (Mouse), this protein is CBY1-interacting BAR domain-containing protein 1.